A 308-amino-acid chain; its full sequence is Glycine--tRNA ligase alpha subunit (308 aa).

Belongs to the class-II aminoacyl-tRNA synthetase family. In terms of assembly, tetramer of two alpha and two beta subunits.

It localises to the cytoplasm. It carries out the reaction tRNA(Gly) + glycine + ATP = glycyl-tRNA(Gly) + AMP + diphosphate. In Polaromonas naphthalenivorans (strain CJ2), this protein is Glycine--tRNA ligase alpha subunit.